Consider the following 336-residue polypeptide: Large ribosomal subunit protein uL10 (336 aa).

A disordered region spans residues 292-336 (LKEKLSSRAAAPAPEEKEEEVEEEAEEEEEEEEEDAAAGLGALFG). Over residues 307 to 327 (EKEEEVEEEAEEEEEEEEEDA) the composition is skewed to acidic residues.

Belongs to the universal ribosomal protein uL10 family. Part of the 50S ribosomal subunit. Forms part of the ribosomal stalk which helps the ribosome interact with GTP-bound translation factors. Forms a heptameric L10(L12)2(L12)2(L12)2 complex, where L10 forms an elongated spine to which the L12 dimers bind in a sequential fashion.

Forms part of the ribosomal stalk, playing a central role in the interaction of the ribosome with GTP-bound translation factors. The sequence is that of Large ribosomal subunit protein uL10 from Methanothermobacter thermautotrophicus (strain ATCC 29096 / DSM 1053 / JCM 10044 / NBRC 100330 / Delta H) (Methanobacterium thermoautotrophicum).